Here is a 348-residue protein sequence, read N- to C-terminus: A-type ATP synthase subunit C (348 aa).

The protein belongs to the V-ATPase V0D/AC39 subunit family. As to quaternary structure, has multiple subunits with at least A(3), B(3), C, D, E, F, H, I and proteolipid K(x).

The protein localises to the cell membrane. In terms of biological role, component of the A-type ATP synthase that produces ATP from ADP in the presence of a proton gradient across the membrane. This is A-type ATP synthase subunit C from Halorubrum lacusprofundi (strain ATCC 49239 / DSM 5036 / JCM 8891 / ACAM 34).